Consider the following 274-residue polypeptide: Large ribosomal subunit protein uL2cz/uL2cy (274 aa).

Disordered stretches follow at residues 1–21 (MAIH…VDSQ) and 225–274 (PVDH…RRSK).

The protein belongs to the universal ribosomal protein uL2 family. In terms of assembly, part of the 50S ribosomal subunit.

Its subcellular location is the plastid. It localises to the chloroplast. The chain is Large ribosomal subunit protein uL2cz/uL2cy (rpl2-A) from Gossypium barbadense (Sea Island cotton).